The sequence spans 248 residues: Triosephosphate isomerase (248 aa).

N10 and K12 together coordinate substrate. H95 serves as the catalytic Electrophile. The Proton acceptor role is filled by E165.

It belongs to the triosephosphate isomerase family. In terms of assembly, homodimer.

It catalyses the reaction D-glyceraldehyde 3-phosphate = dihydroxyacetone phosphate. It functions in the pathway carbohydrate biosynthesis; gluconeogenesis. Its pathway is carbohydrate degradation; glycolysis; D-glyceraldehyde 3-phosphate from glycerone phosphate: step 1/1. This is Triosephosphate isomerase (TPI1) from Zygosaccharomyces bailii.